A 282-amino-acid chain; its full sequence is Putative phosphoesterase 244L (282 aa).

The a divalent metal cation site is built by aspartate 45, asparagine 80, and histidine 203.

The protein belongs to the metallophosphoesterase superfamily. IIV-6 244L family.

In Invertebrate iridescent virus 6 (IIV-6), this protein is Putative phosphoesterase 244L.